Reading from the N-terminus, the 914-residue chain is Translation initiation factor IF-2 (914 aa).

Disordered regions lie at residues 246–271 and 293–313; these read EDGE…KKKG and SGMD…QRRM. Over residues 249–266 the composition is skewed to basic and acidic residues; the sequence is EAAKKKAAKPDGGEDVGV. One can recognise a tr-type G domain in the interval 411 to 581; that stretch reads TRPPVVTIMG…LAEAEIRELK (171 aa). Residues 420-427 are G1; the sequence is GHVDHGKT. 420-427 provides a ligand contact to GTP; sequence GHVDHGKT. The interval 445–449 is G2; that stretch reads GITQH. The tract at residues 467 to 470 is G3; the sequence is DTPG. GTP is bound by residues 467–471 and 521–524; these read DTPGH and NKID. Residues 521–524 are G4; the sequence is NKID. Positions 557–559 are G5; it reads SAK.

Belongs to the TRAFAC class translation factor GTPase superfamily. Classic translation factor GTPase family. IF-2 subfamily.

The protein resides in the cytoplasm. In terms of biological role, one of the essential components for the initiation of protein synthesis. Protects formylmethionyl-tRNA from spontaneous hydrolysis and promotes its binding to the 30S ribosomal subunits. Also involved in the hydrolysis of GTP during the formation of the 70S ribosomal complex. This is Translation initiation factor IF-2 from Chlorobaculum tepidum (strain ATCC 49652 / DSM 12025 / NBRC 103806 / TLS) (Chlorobium tepidum).